The chain runs to 189 residues: Peptidyl-tRNA hydrolase (189 aa).

TRNA is bound at residue Tyr14. The active-site Proton acceptor is His19. TRNA-binding residues include Tyr64, Asn66, and Asn112.

It belongs to the PTH family. Monomer.

It is found in the cytoplasm. It catalyses the reaction an N-acyl-L-alpha-aminoacyl-tRNA + H2O = an N-acyl-L-amino acid + a tRNA + H(+). In terms of biological role, hydrolyzes ribosome-free peptidyl-tRNAs (with 1 or more amino acids incorporated), which drop off the ribosome during protein synthesis, or as a result of ribosome stalling. Its function is as follows. Catalyzes the release of premature peptidyl moieties from peptidyl-tRNA molecules trapped in stalled 50S ribosomal subunits, and thus maintains levels of free tRNAs and 50S ribosomes. The protein is Peptidyl-tRNA hydrolase of Clostridium botulinum (strain Loch Maree / Type A3).